Reading from the N-terminus, the 481-residue chain is Keratin, type II cuticular Hb1 (481 aa).

Residues 1 to 106 (MTCGSGFCGR…PNAQCVKHEE (106 aa)) are head. The IF rod domain occupies 106–417 (EKEQIKCLNS…RLLEGEEQRL (312 aa)). The interval 107 to 141 (KEQIKCLNSKFAAFIDKVRFLEQQNKLLETKWQFY) is coil 1A. Positions 142-151 (QNRKCCESNM) are linker 1. The segment at 152 to 252 (EPLFEGYIEA…YDEETRILHS (101 aa)) is coil 1B. A Glycyl lysine isopeptide (Lys-Gly) (interchain with G-Cter in SUMO1) cross-link involves residue K212. The linker 12 stretch occupies residues 253–269 (HISDTSIVVKMDNSRDL). The tract at residues 270–413 (NMDCVVAEIK…TTYRRLLEGE (144 aa)) is coil 2. A tail region spans residues 414 to 481 (EQRLCEGVGA…GSAVSCGRKC (68 aa)).

This sequence belongs to the intermediate filament family. Heterotetramer of two type I and two type II keratins. In terms of tissue distribution, expressed in dorsal skin.

This Mus musculus (Mouse) protein is Keratin, type II cuticular Hb1.